The chain runs to 192 residues: Putative manganese efflux pump MntP (192 aa).

The next 6 helical transmembrane spans lie at 3 to 23, 36 to 56, 65 to 85, 112 to 132, 136 to 156, and 171 to 191; these read FSAILLLALGLAMDATAVAAA, VLLVAGFFGGAQALMPVIGWL, VQAWDHWIAFVLLAFIGGKML, FVLAIATSIDALAVGITLPML, FAISVVTIGVVTALLSAAGLF, and LAGGVVLIGLGFKILLEHLVL.

It belongs to the MntP (TC 9.B.29) family.

The protein resides in the cell inner membrane. Functionally, probably functions as a manganese efflux pump. This chain is Putative manganese efflux pump MntP, found in Sorangium cellulosum (strain So ce56) (Polyangium cellulosum (strain So ce56)).